The following is a 171-amino-acid chain: MSDYKVNEATIAKKAELVDVYAQKMTEAASIVVADSRGLSVDEDTQLRKQLREAGVEFKVVKNSILRRAAEKAGLEGLSEAFSGPSAVAFSNEDVVAPAKVLADFAKDAENLEIKAGVIEGKVSSKEEIQAIASLPSRDGLLSMLLSVLQAPIRNVALAVKAVAEKEESAA.

The protein belongs to the universal ribosomal protein uL10 family. Part of the ribosomal stalk of the 50S ribosomal subunit. The N-terminus interacts with L11 and the large rRNA to form the base of the stalk. The C-terminus forms an elongated spine to which L12 dimers bind in a sequential fashion forming a multimeric L10(L12)X complex.

In terms of biological role, forms part of the ribosomal stalk, playing a central role in the interaction of the ribosome with GTP-bound translation factors. This is Large ribosomal subunit protein uL10 from Lactococcus lactis subsp. cremoris (strain SK11).